A 513-amino-acid chain; its full sequence is Na(+)/H(+) antiporter NhaB (513 aa).

Helical transmembrane passes span 23–43 (LALIIFLIVNPLIFLISPFVA), 52–72 (IFTLAMALKCYPLLPGGLLAI), 97–117 (LLLMFMVAGIYFMKQLLLFIF), 120–140 (LLLSIRSKMLLSLSFCVAAAF), 144–164 (FLDALTVVAVVISVAVGFYGI), 202–222 (LMMHAGVGTALGGVMTMVGEP), 238–258 (FFLRMSPVTVPVLICGLLTCL), 303–323 (AIIGVWLVTALALHLAEVGLI), 348–368 (TESLPFTALLTVFFSVVAVII), 391–411 (LFYIFNGLLSSISDNVFVGTI), 447–467 (ATPNGQAAFLFLLTSALAPLI), and 475–495 (VWMALPYTLVLTLVGLLCVEF).

It belongs to the NhaB Na(+)/H(+) (TC 2.A.34) antiporter family.

It is found in the cell inner membrane. It catalyses the reaction 2 Na(+)(in) + 3 H(+)(out) = 2 Na(+)(out) + 3 H(+)(in). Functionally, na(+)/H(+) antiporter that extrudes sodium in exchange for external protons. The polypeptide is Na(+)/H(+) antiporter NhaB (Escherichia coli (strain 55989 / EAEC)).